The sequence spans 215 residues: MRIFIDTANVEEIKAANDLGIIAGVTTNPSLIAREGRNFREIVEEIAAIVDGPISAEVVSTTAPEMVAEGVELAAIHPNIVIKIPMIAEGLKAVKELSARGIKTNVTLVFSANQALLAALAGATYVSPFVGRLDDISHDGLQVIADIVPIFAQYGFKTQIIAASIRHPLHVLEAARLGADIATVPFKVLMQMLKHPLTDTGLARFLADWEKVKNK.

The active-site Schiff-base intermediate with substrate is Lys83.

This sequence belongs to the transaldolase family. Type 3B subfamily.

Its subcellular location is the cytoplasm. The catalysed reaction is D-sedoheptulose 7-phosphate + D-glyceraldehyde 3-phosphate = D-erythrose 4-phosphate + beta-D-fructose 6-phosphate. Its pathway is carbohydrate degradation; pentose phosphate pathway; D-glyceraldehyde 3-phosphate and beta-D-fructose 6-phosphate from D-ribose 5-phosphate and D-xylulose 5-phosphate (non-oxidative stage): step 2/3. Functionally, transaldolase is important for the balance of metabolites in the pentose-phosphate pathway. In Moorella thermoacetica (strain ATCC 39073 / JCM 9320), this protein is Probable transaldolase.